A 75-amino-acid polypeptide reads, in one-letter code: Dermaseptin-SP5 (75 aa).

The signal sequence occupies residues 1-22; it reads MAFLKKSLFLVLFLGLVSLSMC. The propeptide occupies 23-45; it reads EEEKRENEVEEEQEDDEQSELRR. Residues 26–46 are disordered; sequence KRENEVEEEQEDDEQSELRRS. Over residues 30 to 40 the composition is skewed to acidic residues; the sequence is EVEEEQEDDEQ. Proline 72 is subject to Proline amide. Residues 74-75 constitute a propeptide that is removed on maturation; it reads EQ.

This sequence belongs to the frog skin active peptide (FSAP) family. Dermaseptin subfamily. In terms of tissue distribution, expressed by the skin glands.

Its subcellular location is the secreted. The protein resides in the target cell membrane. Antimicrobial peptide with weak activity against Gram-positive and Gram-negative bacteria and fungi. Has been tested against E.coli (MIC=96.06-256 uM), S.aureus (MIC&gt;192.12 uM), K.pneumoniae (MIC&gt;189.00 uM) and C.albicans (MIC=384.24-1024 uM). Probably acts by disturbing membrane functions with its alpha-helical amphipathic structure. May penetrate bacterial membranes, but stay at the mammalian membrane surface. Does not show hemolytic activity. Does not interact at all with cardiolipin. This is Dermaseptin-SP5 from Agalychnis spurrelli (Gliding leaf frog).